The primary structure comprises 474 residues: MSIRAPPRLLELARQRLLRDQALAISTMEELPRELFPTLFMEAFSRRRCETLKTMVQAWPFTRLPLGSLMKSPHLESLKSVLEGVDVLLTQEVRPRQSKLQVLDLRNVDENFCDIFSGATASFPEALSQKQTADNCPGTGRQQPFMVFIDLCLKNRTLDECLTHLLEWGKQRKGLLHVCCKELQVFGMPIHSIIEVLNMVELDCIQEVEVCCPWELSTLVKFAPYLGQMRNLRKLVLFNIRASACIPPDNKGQFIARFTSQFLKLDYFQNLSMHSVSFLEGHLDQLLRCLQASLEMVVMTDCLLSESDLKHLSWCPSIRQLKELDLRGVTLTHFSPEPLTGLLEQVVATLQTLDLEDCGIMDSQLSAILPVLSRCSQLSTFSFCGNLISMAALENLLRHTVGLSKLSLELYPAPLESYDTQGALCWGRFAELGAELMNTLRDLRQPKIIVFCTVPCPRCGIRASYDLEPSHCLC.

The LRR 1; degenerate repeat unit spans residues 97-122 (QSKLQVLDLRNVDENFCDIFSGATAS). The LRR 2; degenerate repeat unit spans residues 177–201 (HVCCKELQVFGMPIHSIIEVLNMVE). The stretch at 202–228 (LDCIQEVEVCCPWELSTLVKFAPYLGQ) is one LRR 3; degenerate repeat. Residues 229 to 264 (MRNLRKLVLFNIRASACIPPDNKGQFIARFTSQFLK) form an LRR 4; degenerate repeat. 5 LRR repeats span residues 265–290 (LDYF…LRCL), 291–322 (QASL…RQLK), 323–341 (ELDL…PLTG), 347–374 (VATL…VLSR), and 375–399 (CSQL…LLRH).

This sequence belongs to the PRAME family.

The chain is PRAME family member 8 from Homo sapiens (Human).